Consider the following 115-residue polypeptide: Insulin (115 aa).

The signal sequence occupies residues 1–26 (MALSPFLAAVIPLVLLLSRAPPSADT). 3 cysteine pairs are disulfide-bonded: cysteine 33-cysteine 101, cysteine 45-cysteine 114, and cysteine 100-cysteine 105. Residues 60 to 92 (DTGALAAFLPLAYAEDNESQDDESIGINEVLKS) constitute a propeptide, c peptide.

This sequence belongs to the insulin family. As to quaternary structure, heterodimer of a B chain and an A chain linked by two disulfide bonds.

It localises to the secreted. Its function is as follows. Insulin decreases blood glucose concentration. It increases cell permeability to monosaccharides, amino acids and fatty acids. It accelerates glycolysis, the pentose phosphate cycle, and glycogen synthesis in liver. This chain is Insulin (ins), found in Myxine glutinosa (Atlantic hagfish).